Reading from the N-terminus, the 851-residue chain is Phosphatidylinositol 4-kinase pik1 (851 aa).

Residues 1–123 (MPSSNSGNEL…KICKRLYNRI (123 aa)) enclose the PIK helical domain. 4 positions are modified to phosphoserine: Ser-202, Ser-219, Ser-222, and Ser-235. Tyr-236 bears the Phosphotyrosine mark. Residues 384–404 (LQDSTDNDISESESEGGDLSM) are disordered. Acidic residues predominate over residues 388-399 (TDNDISESESEG). Residues 558-836 (YAKKERIRKS…LIQKANCSVW (279 aa)) form the PI3K/PI4K catalytic domain. Residues 564 to 570 (IRKSSPY) are G-loop. The segment at 706 to 714 (QLKDRHNGN) is catalytic loop. The segment at 725–749 (HIDFGFLLTNTPGNVGFESAPFKLT) is activation loop.

It belongs to the PI3/PI4-kinase family. As to quaternary structure, interacts with cdc4 and cam2.

It is found in the golgi apparatus. The protein localises to the nucleus. The catalysed reaction is a 1,2-diacyl-sn-glycero-3-phospho-(1D-myo-inositol) + ATP = a 1,2-diacyl-sn-glycero-3-phospho-(1D-myo-inositol 4-phosphate) + ADP + H(+). Its function is as follows. Acts on phosphatidylinositol (PI) in the first committed step in the production of the second messenger inositol 1,4,5,-trisphosphate. PIK1 is part of a nuclear phosphoinositide cycle and could control cytokinesis through the actin cytoskeleton. This chain is Phosphatidylinositol 4-kinase pik1 (pik1), found in Schizosaccharomyces pombe (strain 972 / ATCC 24843) (Fission yeast).